The chain runs to 404 residues: Probable mannosyltransferase KTR3 (404 aa).

At 1-27 the chain is on the cytoplasmic side; the sequence is MSVHHKKKLMPKSALLIRKYQKGIRSS. Residues 28 to 44 form a helical; Signal-anchor for type II membrane protein membrane-spanning segment; sequence FIGLIIVLSFLFFMSGS. Positions 45-83 are stem region; the sequence is RSPEVPIAQGTSVSRVASKDYLMPFTDKSQGVIHPVDDG. At 45–404 the chain is on the lumenal side; that stretch reads RSPEVPIAQG…AGNYKLPPGI (360 aa). The catalytic stretch occupies residues 84 to 404; that stretch reads KKEKGVMVTL…AGNYKLPPGI (321 aa). The Nucleophile role is filled by glutamate 295.

Belongs to the glycosyltransferase 15 family. As to quaternary structure, interacts with SVP26.

The protein resides in the membrane. In terms of biological role, possible glycosyltransferase that transfers an alpha-D-mannosyl residue from GDP-mannose into lipid-linked oligosaccharide, forming an alpha-(1-&gt;2)-D-mannosyl-D-mannose linkage. The polypeptide is Probable mannosyltransferase KTR3 (KTR3) (Saccharomyces cerevisiae (strain ATCC 204508 / S288c) (Baker's yeast)).